The sequence spans 96 residues: Conantokin-E (96 aa).

The signal sequence occupies residues 1–24 (LLVPLVTFHLILGMGTLDHGGALT). Residues 25 to 72 (ERRSADATALKPEPVLLQKSDARSTDDNDKDRLTQMKRILKKRGNKAR) constitute a propeptide that is removed on maturation. A disordered region spans residues 28 to 57 (SADATALKPEPVLLQKSDARSTDDNDKDRL). The segment covering 44–57 (SDARSTDDNDKDRL) has biased composition (basic and acidic residues). A 4-carboxyglutamate mark is found at glutamate 75, glutamate 76, glutamate 82, glutamate 86, and glutamate 95. A divalent metal cation-binding residues include glutamate 82 and glutamate 86. Cysteine 83 and cysteine 96 form a disulfide bridge.

Belongs to the conotoxin B superfamily. In terms of tissue distribution, expressed by the venom duct.

The protein localises to the secreted. In terms of biological role, conantokins inhibit N-methyl-D-aspartate (NMDA) receptors. This toxin has the highest potency for the NR2B/GRIN2B subunit, followed by NR2A/GRIN2A, NR2C/GRIN2C, and NR2D/GRIN2D subunits. In Conus ermineus (Agate cone), this protein is Conantokin-E.